The sequence spans 125 residues: MKTARLQVTLRCAVDLINSSSDQCFARIEHVASDQADPRPGVWHSSGMNRIRLSTTVDAALLTSARDMRAGITDAALIDEALAALLARHRSAEVDASYAAYDKHPVDEPDEWGDLASWRRAAGDS.

Forms a complex with cognate toxin MazF5.

Antitoxin component of a type II toxin-antitoxin (TA) system. Upon expression in M.smegmatis neutralizes the effect of cognate toxin MazF5. The polypeptide is Antitoxin MazE5 (mazE5) (Mycobacterium tuberculosis (strain ATCC 25618 / H37Rv)).